A 391-amino-acid polypeptide reads, in one-letter code: Recombination and repair protein (391 aa).

Residue 60–67 (GPSKSFKS) coordinates ATP. Positions 364 to 374 (KSPESKSKSAA) are enriched in basic and acidic residues. The segment at 364–391 (KSPESKSKSAADLETDLEQLSDMEEFNE) is disordered. Over residues 376–391 (LETDLEQLSDMEEFNE) the composition is skewed to acidic residues.

Belongs to the RecA family.

Functionally, important in genetic recombination, DNA repair, and replication. Possesses pairing and strand-transfer activity. Interacts with dda and gene 32 proteins. In Enterobacteria phage T4 (Bacteriophage T4), this protein is Recombination and repair protein (UVSX).